A 217-amino-acid chain; its full sequence is Ribonuclease T (217 aa).

Positions 20–194 (VVIDIETAGF…YDTQQTANLF (175 aa)) constitute an Exonuclease domain. Residues D23, E25, H181, and D186 each contribute to the Mg(2+) site. Catalysis depends on H181, which acts as the Proton donor/acceptor.

Belongs to the RNase T family. As to quaternary structure, homodimer. Requires Mg(2+) as cofactor.

In terms of biological role, trims short 3' overhangs of a variety of RNA species, leaving a one or two nucleotide 3' overhang. Responsible for the end-turnover of tRNA: specifically removes the terminal AMP residue from uncharged tRNA (tRNA-C-C-A). Also appears to be involved in tRNA biosynthesis. This chain is Ribonuclease T, found in Buchnera aphidicola subsp. Baizongia pistaciae (strain Bp).